Reading from the N-terminus, the 149-residue chain is UPF0756 membrane protein MS1439 (149 aa).

The next 4 helical transmembrane spans lie at 10–32 (IMLVVLILLGVLSNNNSITISAL), 56–76 (VGIIILTVGVLAPLVSGKVQL), 82–102 (FLNWQMFLSIVIGIAVAWFAG), and 126–146 (VAFLGGIPVGPLIAAGILAVI).

This sequence belongs to the UPF0756 family.

It is found in the cell membrane. This is UPF0756 membrane protein MS1439 from Mannheimia succiniciproducens (strain KCTC 0769BP / MBEL55E).